A 476-amino-acid chain; its full sequence is UDP-N-acetylmuramate--L-alanine ligase (476 aa).

121-127 (GAHGKTT) is a binding site for ATP.

This sequence belongs to the MurCDEF family.

It is found in the cytoplasm. The catalysed reaction is UDP-N-acetyl-alpha-D-muramate + L-alanine + ATP = UDP-N-acetyl-alpha-D-muramoyl-L-alanine + ADP + phosphate + H(+). Its pathway is cell wall biogenesis; peptidoglycan biosynthesis. Cell wall formation. In Clavibacter michiganensis subsp. michiganensis (strain NCPPB 382), this protein is UDP-N-acetylmuramate--L-alanine ligase.